The chain runs to 591 residues: V-type ATP synthase alpha chain (591 aa).

232-239 (GPFGAGKT) is a binding site for ATP.

The protein belongs to the ATPase alpha/beta chains family.

It carries out the reaction ATP + H2O + 4 H(+)(in) = ADP + phosphate + 5 H(+)(out). Functionally, produces ATP from ADP in the presence of a proton gradient across the membrane. The V-type alpha chain is a catalytic subunit. The chain is V-type ATP synthase alpha chain from Clostridium perfringens (strain ATCC 13124 / DSM 756 / JCM 1290 / NCIMB 6125 / NCTC 8237 / Type A).